Reading from the N-terminus, the 191-residue chain is Protein GrpE (191 aa).

Composition is skewed to basic and acidic residues over residues 1–19 and 29–45; these read MKDE…EPES and QQGE…GEIK. The tract at residues 1-45 is disordered; it reads MKDEHNQEHDHLSPKEPESYQKAYACKEQQGEEKQEASEKEGEIK.

It belongs to the GrpE family. Homodimer.

Its subcellular location is the cytoplasm. Participates actively in the response to hyperosmotic and heat shock by preventing the aggregation of stress-denatured proteins, in association with DnaK and GrpE. It is the nucleotide exchange factor for DnaK and may function as a thermosensor. Unfolded proteins bind initially to DnaJ; upon interaction with the DnaJ-bound protein, DnaK hydrolyzes its bound ATP, resulting in the formation of a stable complex. GrpE releases ADP from DnaK; ATP binding to DnaK triggers the release of the substrate protein, thus completing the reaction cycle. Several rounds of ATP-dependent interactions between DnaJ, DnaK and GrpE are required for fully efficient folding. The sequence is that of Protein GrpE from Helicobacter pylori (strain J99 / ATCC 700824) (Campylobacter pylori J99).